We begin with the raw amino-acid sequence, 299 residues long: Homeobox protein Nkx-2.5 (299 aa).

Residues 90–119 (KDPKDHKKDICPLQKTLEHDKREAEDPERP) show a composition bias toward basic and acidic residues. The disordered stretch occupies residues 90–128 (KDPKDHKKDICPLQKTLEHDKREAEDPERPRQRKRRKPR). A DNA-binding region (homeobox) is located at residues 124 to 183 (RRKPRVLFSQAQVYELERRFKQQKYLSAPERDHLANVLKLTSTQVKIWFQNRRYKCKRQR).

Belongs to the NK-2 homeobox family. In terms of assembly, homodimer (via the homeobox); binds DNA as homodimer. Heart and gut tissue.

It localises to the nucleus. In terms of biological role, transcription factor required for the development of the heart and the spleen. Implicated in commitment to and/or differentiation of the myocardial lineage. May regulate the expression of genes involved in cardiogenesis and play a role in the formation of gut and the pharyngeal region. Binds to the core DNA motif of promoter. The protein is Homeobox protein Nkx-2.5 (nkx-2.5) of Xenopus laevis (African clawed frog).